The sequence spans 338 residues: Ketol-acid reductoisomerase (NADP(+)) (338 aa).

The KARI N-terminal Rossmann domain occupies 1 to 181; it reads MRVYYDKDCD…GGGRSGIIET (181 aa). NADP(+) contacts are provided by residues 24 to 27, R47, S50, S52, and 82 to 85; these read YGSQ and DENQ. The active site involves H107. Residue G133 participates in NADP(+) binding. The KARI C-terminal knotted domain occupies 182–327; the sequence is TFKDETETDL…EKLRGMMPWI (146 aa). 4 residues coordinate Mg(2+): D190, E194, E226, and E230. S251 is a binding site for substrate.

It belongs to the ketol-acid reductoisomerase family. Mg(2+) is required as a cofactor.

The enzyme catalyses (2R)-2,3-dihydroxy-3-methylbutanoate + NADP(+) = (2S)-2-acetolactate + NADPH + H(+). It catalyses the reaction (2R,3R)-2,3-dihydroxy-3-methylpentanoate + NADP(+) = (S)-2-ethyl-2-hydroxy-3-oxobutanoate + NADPH + H(+). Its pathway is amino-acid biosynthesis; L-isoleucine biosynthesis; L-isoleucine from 2-oxobutanoate: step 2/4. It functions in the pathway amino-acid biosynthesis; L-valine biosynthesis; L-valine from pyruvate: step 2/4. In terms of biological role, involved in the biosynthesis of branched-chain amino acids (BCAA). Catalyzes an alkyl-migration followed by a ketol-acid reduction of (S)-2-acetolactate (S2AL) to yield (R)-2,3-dihydroxy-isovalerate. In the isomerase reaction, S2AL is rearranged via a Mg-dependent methyl migration to produce 3-hydroxy-3-methyl-2-ketobutyrate (HMKB). In the reductase reaction, this 2-ketoacid undergoes a metal-dependent reduction by NADPH to yield (R)-2,3-dihydroxy-isovalerate. The protein is Ketol-acid reductoisomerase (NADP(+)) of Chromohalobacter salexigens (strain ATCC BAA-138 / DSM 3043 / CIP 106854 / NCIMB 13768 / 1H11).